Reading from the N-terminus, the 233-residue chain is MADS-box transcription factor 20 (233 aa).

Positions 1-61 constitute an MADS-box domain; sequence MGRGKVQVRR…GNLFHYASSH (61 aa). The K-box domain occupies 91–184; that stretch reads EGSMSYDHIK…PTKAAAPPAC (94 aa).

As to expression, expressed in developing seeds and seedling shoots.

The protein localises to the nucleus. In terms of biological role, probable transcription factor. In Oryza sativa subsp. japonica (Rice), this protein is MADS-box transcription factor 20 (MADS20).